A 111-amino-acid chain; its full sequence is TPR repeat-containing protein associated with Hsp90 (111 aa).

N-acetylserine is present on Ser-2. TPR repeat units follow at residues 4–37 (FEKQKEQGNSLFKQGLYREAVHCYDQLITAQPQN) and 39–71 (VGYSNKAMALIKLGEYTQAIQMCQQGLRYTSTA).

In terms of assembly, component of the R2TP complex composed at least of RVB1, RVB2, TAH1 and PIH1. Also interacts with HSP90.

Its subcellular location is the cytoplasm. The protein resides in the nucleus. In Saccharomyces cerevisiae (strain ATCC 204508 / S288c) (Baker's yeast), this protein is TPR repeat-containing protein associated with Hsp90 (TAH1).